Here is a 501-residue protein sequence, read N- to C-terminus: ATP-dependent rRNA helicase RRP3 (501 aa).

Residues Lys3–Glu44 are a coiled coil. Positions Glu36 to Ser79 are disordered. Phosphoserine occurs at positions 43, 45, and 47. The Q motif signature appears at Glu81–Ser109. The Helicase ATP-binding domain occupies Ile112–Cys284. ATP is bound at residue Ala125–Thr132. The DEAD box signature appears at Asp231–Asp234. The 155-residue stretch at Leu307–Val461 folds into the Helicase C-terminal domain. Residues Ile480 to Arg501 are disordered. Over residues Met491 to Arg501 the composition is skewed to basic and acidic residues.

Belongs to the DEAD box helicase family. DDX47/RRP3 subfamily. As to quaternary structure, interacts with the SSU processome.

It is found in the nucleus. It catalyses the reaction ATP + H2O = ADP + phosphate + H(+). Functionally, ATP-dependent rRNA helicase required for pre-ribosomal RNA processing. Involved in the maturation of the 35S-pre-rRNA and to its cleavage to mature 18S rRNA. In Saccharomyces cerevisiae (strain YJM789) (Baker's yeast), this protein is ATP-dependent rRNA helicase RRP3.